Consider the following 543-residue polypeptide: CTP synthase (543 aa).

The tract at residues M1–I265 is amidoligase domain. Position 13 (S13) interacts with CTP. S13 is a UTP binding site. S14–L19 lines the ATP pocket. Position 54 (Y54) interacts with L-glutamine. D71 lines the ATP pocket. The Mg(2+) site is built by D71 and E139. CTP-binding positions include D146–E148, K186–Q191, and K222. UTP is bound by residues K186–Q191 and K222. R238–V240 contributes to the ATP binding site. Positions T291–L542 constitute a Glutamine amidotransferase type-1 domain. Residue G353 coordinates L-glutamine. C380 serves as the catalytic Nucleophile; for glutamine hydrolysis. L-glutamine-binding positions include F381–Q384, E404, and R470. Residues H515 and E517 contribute to the active site.

The protein belongs to the CTP synthase family. Homotetramer.

The enzyme catalyses UTP + L-glutamine + ATP + H2O = CTP + L-glutamate + ADP + phosphate + 2 H(+). It catalyses the reaction L-glutamine + H2O = L-glutamate + NH4(+). It carries out the reaction UTP + NH4(+) + ATP = CTP + ADP + phosphate + 2 H(+). The protein operates within pyrimidine metabolism; CTP biosynthesis via de novo pathway; CTP from UDP: step 2/2. Allosterically activated by GTP, when glutamine is the substrate; GTP has no effect on the reaction when ammonia is the substrate. The allosteric effector GTP functions by stabilizing the protein conformation that binds the tetrahedral intermediate(s) formed during glutamine hydrolysis. Inhibited by the product CTP, via allosteric rather than competitive inhibition. In terms of biological role, catalyzes the ATP-dependent amination of UTP to CTP with either L-glutamine or ammonia as the source of nitrogen. Regulates intracellular CTP levels through interactions with the four ribonucleotide triphosphates. The chain is CTP synthase from Bradyrhizobium diazoefficiens (strain JCM 10833 / BCRC 13528 / IAM 13628 / NBRC 14792 / USDA 110).